Consider the following 451-residue polypeptide: CBL-interacting protein kinase 22 (451 aa).

One can recognise a Protein kinase domain in the interval 26–301 (YELGRVLGQG…IGEIFDHPWL (276 aa)). ATP-binding positions include 32–40 (LGQGASSKV) and lysine 55. The Proton acceptor role is filled by aspartate 165. The tract at residues 183–216 (DFGLSAFADADQHLGATDGLAATHCGSPAYVAPE) is activation loop. Positions 330–356 (ELEQAMELNAFDIIGFASGCDLSGLIG) constitute an NAF domain. Positions 361–389 (RVRFVLPGGDSKSVLDKVEKLGREEGLVV) are PPI.

This sequence belongs to the protein kinase superfamily. CAMK Ser/Thr protein kinase family. SNF1 subfamily. Mn(2+) is required as a cofactor.

It carries out the reaction L-seryl-[protein] + ATP = O-phospho-L-seryl-[protein] + ADP + H(+). It catalyses the reaction L-threonyl-[protein] + ATP = O-phospho-L-threonyl-[protein] + ADP + H(+). In terms of biological role, CIPK serine-threonine protein kinases interact with CBL proteins. Binding of a CBL protein to the regulatory NAF domain of CIPK protein lead to the activation of the kinase in a calcium-dependent manner. The protein is CBL-interacting protein kinase 22 (CIPK22) of Oryza sativa subsp. japonica (Rice).